Here is a 426-residue protein sequence, read N- to C-terminus: Serine--tRNA ligase (426 aa).

L-serine is bound at residue 231-233 (TAE). 262-264 (RSE) contributes to the ATP binding site. Residue Glu-285 participates in L-serine binding. An ATP-binding site is contributed by 349–352 (EISS). Ser-385 contacts L-serine.

The protein belongs to the class-II aminoacyl-tRNA synthetase family. Type-1 seryl-tRNA synthetase subfamily. As to quaternary structure, homodimer. The tRNA molecule binds across the dimer.

Its subcellular location is the cytoplasm. The catalysed reaction is tRNA(Ser) + L-serine + ATP = L-seryl-tRNA(Ser) + AMP + diphosphate + H(+). The enzyme catalyses tRNA(Sec) + L-serine + ATP = L-seryl-tRNA(Sec) + AMP + diphosphate + H(+). Its pathway is aminoacyl-tRNA biosynthesis; selenocysteinyl-tRNA(Sec) biosynthesis; L-seryl-tRNA(Sec) from L-serine and tRNA(Sec): step 1/1. Its function is as follows. Catalyzes the attachment of serine to tRNA(Ser). Is also able to aminoacylate tRNA(Sec) with serine, to form the misacylated tRNA L-seryl-tRNA(Sec), which will be further converted into selenocysteinyl-tRNA(Sec). In Saccharophagus degradans (strain 2-40 / ATCC 43961 / DSM 17024), this protein is Serine--tRNA ligase.